The following is a 416-amino-acid chain: Serine hydroxymethyltransferase (416 aa).

Residues leucine 121 and 125 to 127 each bind (6S)-5,6,7,8-tetrahydrofolate; that span reads GHL. Lysine 229 is modified (N6-(pyridoxal phosphate)lysine).

Belongs to the SHMT family. In terms of assembly, homodimer. Pyridoxal 5'-phosphate is required as a cofactor.

Its subcellular location is the cytoplasm. The catalysed reaction is (6R)-5,10-methylene-5,6,7,8-tetrahydrofolate + glycine + H2O = (6S)-5,6,7,8-tetrahydrofolate + L-serine. It participates in one-carbon metabolism; tetrahydrofolate interconversion. Its pathway is amino-acid biosynthesis; glycine biosynthesis; glycine from L-serine: step 1/1. Its function is as follows. Catalyzes the reversible interconversion of serine and glycine with tetrahydrofolate (THF) serving as the one-carbon carrier. This reaction serves as the major source of one-carbon groups required for the biosynthesis of purines, thymidylate, methionine, and other important biomolecules. Also exhibits THF-independent aldolase activity toward beta-hydroxyamino acids, producing glycine and aldehydes, via a retro-aldol mechanism. This is Serine hydroxymethyltransferase from Neisseria gonorrhoeae (strain NCCP11945).